The chain runs to 393 residues: 8-amino-7-oxononanoate synthase (393 aa).

A pyridoxal 5'-phosphate-binding site is contributed by 108–109 (GF). Residue His133 coordinates substrate. Residues Ser182, 207-210 (DDAH), and 238-241 (TLSK) each bind pyridoxal 5'-phosphate. Position 241 is an N6-(pyridoxal phosphate)lysine (Lys241). Thr355 is a substrate binding site.

It belongs to the class-II pyridoxal-phosphate-dependent aminotransferase family. BioF subfamily. In terms of assembly, homodimer. It depends on pyridoxal 5'-phosphate as a cofactor.

It catalyses the reaction 6-carboxyhexanoyl-[ACP] + L-alanine + H(+) = (8S)-8-amino-7-oxononanoate + holo-[ACP] + CO2. The protein operates within cofactor biosynthesis; biotin biosynthesis. Catalyzes the decarboxylative condensation of pimeloyl-[acyl-carrier protein] and L-alanine to produce 8-amino-7-oxononanoate (AON), [acyl-carrier protein], and carbon dioxide. This is 8-amino-7-oxononanoate synthase from Petrotoga mobilis (strain DSM 10674 / SJ95).